We begin with the raw amino-acid sequence, 359 residues long: Outer membrane protein assembly factor BamC (359 aa).

The N-terminal stretch at 1–34 (MASLFDKNSFQMTRLQKTAVAKVVGVSLIMLLAA) is a signal peptide. A lipid anchor (N-palmitoyl cysteine) is attached at Cys35. Residue Cys35 is the site of S-diacylglycerol cysteine attachment.

It belongs to the BamC family. Part of the Bam complex, which is composed of the outer membrane protein BamA, and four lipoproteins BamB, BamC, BamD and BamE.

The protein localises to the cell outer membrane. In terms of biological role, part of the outer membrane protein assembly complex, which is involved in assembly and insertion of beta-barrel proteins into the outer membrane. The sequence is that of Outer membrane protein assembly factor BamC from Rahnella sp. (strain Y9602).